A 352-amino-acid chain; its full sequence is Anthranilate phosphoribosyltransferase (352 aa).

5-phospho-alpha-D-ribose 1-diphosphate is bound by residues G82, 85–86 (GD), S90, 92–95 (NIST), 110–118 (KHGNRAVTG), and G122. G82 serves as a coordination point for anthranilate. A Mg(2+)-binding site is contributed by S94. N113 contacts anthranilate. R168 provides a ligand contact to anthranilate. Residues D232 and E233 each contribute to the Mg(2+) site.

This sequence belongs to the anthranilate phosphoribosyltransferase family. Homodimer. Mg(2+) serves as cofactor.

It carries out the reaction N-(5-phospho-beta-D-ribosyl)anthranilate + diphosphate = 5-phospho-alpha-D-ribose 1-diphosphate + anthranilate. It participates in amino-acid biosynthesis; L-tryptophan biosynthesis; L-tryptophan from chorismate: step 2/5. Functionally, catalyzes the transfer of the phosphoribosyl group of 5-phosphorylribose-1-pyrophosphate (PRPP) to anthranilate to yield N-(5'-phosphoribosyl)-anthranilate (PRA). In Methanothermobacter thermautotrophicus (strain ATCC 29096 / DSM 1053 / JCM 10044 / NBRC 100330 / Delta H) (Methanobacterium thermoautotrophicum), this protein is Anthranilate phosphoribosyltransferase.